A 199-amino-acid chain; its full sequence is Translation initiation factor IF-3 (199 aa).

It belongs to the IF-3 family. As to quaternary structure, monomer.

Its subcellular location is the cytoplasm. In terms of biological role, IF-3 binds to the 30S ribosomal subunit and shifts the equilibrium between 70S ribosomes and their 50S and 30S subunits in favor of the free subunits, thus enhancing the availability of 30S subunits on which protein synthesis initiation begins. The polypeptide is Translation initiation factor IF-3 (Gloeobacter violaceus (strain ATCC 29082 / PCC 7421)).